A 119-amino-acid polypeptide reads, in one-letter code: Large ribosomal subunit protein bL20 (119 aa).

This sequence belongs to the bacterial ribosomal protein bL20 family.

In terms of biological role, binds directly to 23S ribosomal RNA and is necessary for the in vitro assembly process of the 50S ribosomal subunit. It is not involved in the protein synthesizing functions of that subunit. The chain is Large ribosomal subunit protein bL20 from Caldicellulosiruptor bescii (strain ATCC BAA-1888 / DSM 6725 / KCTC 15123 / Z-1320) (Anaerocellum thermophilum).